Reading from the N-terminus, the 316-residue chain is Cytochrome c biogenesis protein CcsA (316 aa).

8 helical membrane-spanning segments follow: residues 12–32, 44–64, 71–91, 98–118, 145–165, 222–242, 256–270, and 283–303; these read HISL…LLVY, GMVA…IYSG, LYES…IPYF, LNVL…SGVL, LSYA…VILF, VISL…VWAN, TWAF…IYLH, and AIVA…VNLL.

The protein belongs to the CcmF/CycK/Ccl1/NrfE/CcsA family. In terms of assembly, may interact with Ccs1.

It localises to the plastid. Its subcellular location is the chloroplast thylakoid membrane. Required during biogenesis of c-type cytochromes (cytochrome c6 and cytochrome f) at the step of heme attachment. The polypeptide is Cytochrome c biogenesis protein CcsA (Ranunculus macranthus (Large buttercup)).